Reading from the N-terminus, the 199-residue chain is Probable nicotinate-nucleotide adenylyltransferase (199 aa).

Belongs to the NadD family.

It carries out the reaction nicotinate beta-D-ribonucleotide + ATP + H(+) = deamido-NAD(+) + diphosphate. It functions in the pathway cofactor biosynthesis; NAD(+) biosynthesis; deamido-NAD(+) from nicotinate D-ribonucleotide: step 1/1. In terms of biological role, catalyzes the reversible adenylation of nicotinate mononucleotide (NaMN) to nicotinic acid adenine dinucleotide (NaAD). The polypeptide is Probable nicotinate-nucleotide adenylyltransferase (Chloroherpeton thalassium (strain ATCC 35110 / GB-78)).